Reading from the N-terminus, the 134-residue chain is uncharacterized protein (134 aa).

The chain crosses the membrane as a helical span at residues 110–130 (SLGVLTDILFLVLYSLLIHLS).

It localises to the membrane. This is an uncharacterized protein from Saccharomyces cerevisiae (strain ATCC 204508 / S288c) (Baker's yeast).